A 186-amino-acid chain; its full sequence is Casparian strip membrane protein 5 (186 aa).

Over 1–23 (MEHGEISSKAPLVAPVAAGVNRA) the chain is Cytoplasmic. The helical transmembrane segment at 24-44 (VAVVDTFLRFIAIIGTIGSAI) threads the bilayer. At 45–73 (AMGTTNETLPFFTQFIQFEAKYSDLPSFT) the chain is on the extracellular side. A glycan (N-linked (GlcNAc...) asparagine) is linked at Asn50. Residues 74–94 (FFVAANAVVCTYLVLSIPLSI) form a helical membrane-spanning segment. Over 95–106 (VHILRPRARYSR) the chain is Cytoplasmic. The helical transmembrane segment at 107-127 (LFLVFFDTAMLALLTAGASAA) threads the bilayer. Residues 128-160 (AAIVYLAHKGNVRANWFSICQQFDSFCERISGS) are Extracellular-facing. A helical membrane pass occupies residues 161–181 (LIGSFAAMVLLVVLITLSAFA). At 182–186 (LARRH) the chain is on the cytoplasmic side.

Belongs to the Casparian strip membrane proteins (CASP) family. Homodimer and heterodimers.

Its subcellular location is the cell membrane. In terms of biological role, regulates membrane-cell wall junctions and localized cell wall deposition. Required for establishment of the Casparian strip membrane domain (CSD) and the subsequent formation of Casparian strips, a cell wall modification of the root endodermis that determines an apoplastic barrier between the intraorganismal apoplasm and the extraorganismal apoplasm and prevents lateral diffusion. The polypeptide is Casparian strip membrane protein 5 (Oryza sativa subsp. japonica (Rice)).